We begin with the raw amino-acid sequence, 173 residues long: Phosphopantetheine adenylyltransferase (173 aa).

Substrate is bound at residue Ser-9. ATP contacts are provided by residues 9 to 10 (SF) and His-17. Substrate is bound by residues Lys-41, Thr-73, and Arg-87. Residues 88 to 90 (GLR), Glu-98, and 123 to 129 (YQHLSSS) contribute to the ATP site.

The protein belongs to the bacterial CoaD family. As to quaternary structure, homohexamer. Requires Mg(2+) as cofactor.

Its subcellular location is the cytoplasm. The catalysed reaction is (R)-4'-phosphopantetheine + ATP + H(+) = 3'-dephospho-CoA + diphosphate. It participates in cofactor biosynthesis; coenzyme A biosynthesis; CoA from (R)-pantothenate: step 4/5. In terms of biological role, reversibly transfers an adenylyl group from ATP to 4'-phosphopantetheine, yielding dephospho-CoA (dPCoA) and pyrophosphate. This chain is Phosphopantetheine adenylyltransferase, found in Limosilactobacillus reuteri (strain DSM 20016) (Lactobacillus reuteri).